The sequence spans 213 residues: Cytochrome b6 (213 aa).

The chain crosses the membrane as a helical span at residues 30 to 50 (IFFCLGGLTLLCFIVQCLTGI). A heme c-binding site is contributed by Cys-33. 2 residues coordinate heme b: His-84 and His-98. 3 consecutive transmembrane segments (helical) span residues 88 to 108 (CQLM…TGAF), 114 to 134 (LNWV…FTGY), and 184 to 204 (LHVM…FIMI). Heme b is bound by residues His-185 and His-200.

The protein belongs to the cytochrome b family. PetB subfamily. As to quaternary structure, the subunits of the cytochrome bc complex are a Rieske Fe-S protein (PetC), cytochrome b6 (PetB), subunit IV (PetD), and a diheme cytochrome c (PetX). Requires heme b as cofactor. Heme c is required as a cofactor.

It is found in the cell membrane. Component of the cytochrome bc complex which donates electrons to the photosynthetic reaction center. This Heliomicrobium gestii (Heliobacterium gestii) protein is Cytochrome b6.